We begin with the raw amino-acid sequence, 444 residues long: Tubulin beta-7 chain (444 aa).

Positions 11, 69, 138, 142, 143, 144, 204, and 226 each coordinate GTP. Glu-69 provides a ligand contact to Mg(2+).

It belongs to the tubulin family. As to quaternary structure, dimer of alpha and beta chains. A typical microtubule is a hollow water-filled tube with an outer diameter of 25 nm and an inner diameter of 15 nM. Alpha-beta heterodimers associate head-to-tail to form protofilaments running lengthwise along the microtubule wall with the beta-tubulin subunit facing the microtubule plus end conferring a structural polarity. Microtubules usually have 13 protofilaments but different protofilament numbers can be found in some organisms and specialized cells. Mg(2+) serves as cofactor. As to expression, expressed in roots, leaf sheaths, and suspension cultured cells.

Its subcellular location is the cytoplasm. It localises to the cytoskeleton. Functionally, tubulin is the major constituent of microtubules, a cylinder consisting of laterally associated linear protofilaments composed of alpha- and beta-tubulin heterodimers. Microtubules grow by the addition of GTP-tubulin dimers to the microtubule end, where a stabilizing cap forms. Below the cap, tubulin dimers are in GDP-bound state, owing to GTPase activity of alpha-tubulin. This is Tubulin beta-7 chain (TUBB7) from Oryza sativa subsp. japonica (Rice).